A 130-amino-acid chain; its full sequence is NADH-quinone oxidoreductase subunit A (130 aa).

The next 3 helical transmembrane spans lie at 17–37 (YIFV…MLAL), 74–94 (LVGI…PWAV), and 99–119 (LGPA…VGFV).

This sequence belongs to the complex I subunit 3 family. As to quaternary structure, NDH-1 is composed of 14 different subunits. Subunits NuoA, H, J, K, L, M, N constitute the membrane sector of the complex.

Its subcellular location is the cell inner membrane. The catalysed reaction is a quinone + NADH + 5 H(+)(in) = a quinol + NAD(+) + 4 H(+)(out). Functionally, NDH-1 shuttles electrons from NADH, via FMN and iron-sulfur (Fe-S) centers, to quinones in the respiratory chain. The immediate electron acceptor for the enzyme in this species is believed to be ubiquinone. Couples the redox reaction to proton translocation (for every two electrons transferred, four hydrogen ions are translocated across the cytoplasmic membrane), and thus conserves the redox energy in a proton gradient. This Neorickettsia sennetsu (strain ATCC VR-367 / Miyayama) (Ehrlichia sennetsu) protein is NADH-quinone oxidoreductase subunit A.